The chain runs to 23 residues: Phallacidin proprotein 1 (23 aa).

A propeptide is located at residue Pro1. The segment at residues 2 to 8 (AWLVDCP) is a cross-link (cyclopeptide (Ala-Pro)). The 2'-cysteinyl-6'-hydroxytryptophan sulfoxide (Trp-Cys) cross-link spans 3 to 7 (WLVDC). Positions 9–23 (CVGDDVNRLLTRGER) are excised as a propeptide.

The protein belongs to the MSDIN fungal toxin family. In terms of processing, processed by the macrocyclase-peptidase enzyme POPB to yield a toxic cyclic heptapeptide. POPB first removes 10 residues from the N-terminus. Conformational trapping of the remaining peptide forces the enzyme to release this intermediate rather than proceed to macrocyclization. The enzyme rebinds the remaining peptide in a different conformation and catalyzes macrocyclization of the N-terminal 7 residues.

Functionally, toxin that belongs to the bicyclic heptapeptides called phallotoxins. Although structurally related to amatoxins, phallotoxins have a different mode of action, which is the stabilization of F-actin. Phallotoxins are poisonous when administered parenterally, but not orally because of poor absorption. The sequence is that of Phallacidin proprotein 1 from Amanita exitialis (Guangzhou destroying angel).